The following is a 156-amino-acid chain: MSAVLDTPVAIRRTAMDLLARREHGRVELTRKLRQRGASDELIEPELDRLAEEGLLSEARYLESFIRYRSGSGYGPARIREELCQRGLARADIDQALRESEVNWGERMRDVWQRKFAGQRPQDPRSRAQQTRFLAYRGFPMDMIGRLLSGRDLDDY.

This sequence belongs to the RecX family.

It localises to the cytoplasm. Its function is as follows. Modulates RecA activity. The protein is Regulatory protein RecX of Pseudomonas putida (strain ATCC 700007 / DSM 6899 / JCM 31910 / BCRC 17059 / LMG 24140 / F1).